We begin with the raw amino-acid sequence, 602 residues long: T-box transcription factor TBX15 (602 aa).

The segment at 46–84 (ALSPAGPLGDTEDAAAHGLEPHPDSEQSTGSDSEVLTER) is disordered. A compositionally biased stretch (polar residues) spans 71-84 (EQSTGSDSEVLTER). Residues 122 to 304 (LWKRFHDIGT…RNPFAKGFRD (183 aa)) constitute a DNA-binding region (T-box). Phosphothreonine is present on threonine 330. 2 disordered regions span residues 338-369 (QKQQ…LSPS) and 425-447 (QSGT…PSLI). Residues 346 to 369 (GTSPTTSSTGTPSPSASSHLLSPS) are compositionally biased toward low complexity. Positions 425–446 (QSGTTSATQPSETFMPQRTPSL) are enriched in polar residues.

In terms of assembly, can form a heterodimer with TBX18.

It localises to the nucleus. Probable transcriptional regulator involved in the development of the skeleton of the limb, vertebral column and head. Acts by controlling the number of mesenchymal precursor cells and chondrocytes. This is T-box transcription factor TBX15 (TBX15) from Homo sapiens (Human).